A 569-amino-acid polypeptide reads, in one-letter code: Proline--tRNA ligase (569 aa).

Belongs to the class-II aminoacyl-tRNA synthetase family. ProS type 1 subfamily. In terms of assembly, homodimer.

The protein localises to the cytoplasm. It catalyses the reaction tRNA(Pro) + L-proline + ATP = L-prolyl-tRNA(Pro) + AMP + diphosphate. Functionally, catalyzes the attachment of proline to tRNA(Pro) in a two-step reaction: proline is first activated by ATP to form Pro-AMP and then transferred to the acceptor end of tRNA(Pro). As ProRS can inadvertently accommodate and process non-cognate amino acids such as alanine and cysteine, to avoid such errors it has two additional distinct editing activities against alanine. One activity is designated as 'pretransfer' editing and involves the tRNA(Pro)-independent hydrolysis of activated Ala-AMP. The other activity is designated 'posttransfer' editing and involves deacylation of mischarged Ala-tRNA(Pro). The misacylated Cys-tRNA(Pro) is not edited by ProRS. This Legionella pneumophila (strain Lens) protein is Proline--tRNA ligase.